The sequence spans 462 residues: Retinoic acid receptor RXR-alpha (462 aa).

Residues 1 to 107 are disordered; that stretch reads MDTKHFLPLD…MNPVSSSEDI (107 aa). The tract at residues 1–134 is modulating; the sequence is MDTKHFLPLD…GNMASFTKHI (134 aa). A Glycyl lysine isopeptide (Lys-Gly) (interchain with G-Cter in SUMO2) cross-link involves residue lysine 4. Residues 11-24 are compositionally biased toward polar residues; it reads FSTQVNSSLTSPTG. 2 positions are modified to phosphoserine: serine 21 and serine 27. A compositionally biased stretch (polar residues) spans 49 to 58; it reads SPISTLSSPI. Phosphoserine; by MAPK8 and MAPK9 occurs at positions 56 and 70. A compositionally biased stretch (polar residues) spans 78–104; that stretch reads SVPTTPTLGFSTGSPQLSSPMNPVSSS. Threonine 82 carries the phosphothreonine; by MAPK8 and MAPK9 modification. Residue lysine 108 forms a Glycyl lysine isopeptide (Lys-Gly) (interchain with G-Cter in SUMO) linkage. The residue at position 129 (serine 129) is a Phosphoserine. Residues cysteine 135 and cysteine 138 each coordinate Zn(2+). The NR C4-type zinc-finger motif lies at 135–155; it reads CAICGDRSSGKHYGVYSCEGC. Residues 135-200 constitute a DNA-binding region (nuclear receptor); the sequence is CAICGDRSSG…RYQKCLAMGM (66 aa). An N6-acetyllysine; by EP300 modification is found at lysine 145. Cysteine 152 and cysteine 155 together coordinate Zn(2+). A nuclear localization signal region spans residues 160–165; sequence KRTVRK. Residues cysteine 171, cysteine 177, cysteine 187, and cysteine 190 each coordinate Zn(2+). An NR C4-type zinc finger spans residues 171–195; sequence CRDNKDCLIDKRQRNRCQYCRYQKC. Residues 201–224 form a hinge region; sequence KREAVQEERQRGKDRNENEVESTS. Residues 206-218 are compositionally biased toward basic and acidic residues; the sequence is QEERQRGKDRNEN. Residues 206 to 228 form a disordered region; sequence QEERQRGKDRNENEVESTSSANE. Positions 227–458 constitute an NR LBD domain; that stretch reads NEDMPVERIL…TFLMEMLEAP (232 aa). Serine 259 is modified (phosphoserine). The residue at position 260 (serine 260) is a Phosphoserine; by MAPK8 and MAPK9. Residues arginine 316 and alanine 327 each coordinate 9-cis-retinoate. 2 residues coordinate all-trans-retinoate: arginine 316 and alanine 327. The segment at 348–368 is required for nuclear export; that stretch reads RVLTELVSKMRDMQMDKTELG.

This sequence belongs to the nuclear hormone receptor family. NR2 subfamily. In terms of assembly, homodimer. Heterodimer (via C-terminus) with RARA; required for ligand-dependent retinoic acid receptor transcriptional activity; association with RARA is enhanced by pulsatile shear stress. Heterodimer with PPARA (via the leucine-like zipper in the LBD); the interaction is required for PPARA transcriptional activity. Heterodimerizes with PPARG. Heterodimerizes (via NR LBD) with RARB. Heterodimerizes with NR1H4; the heterodimerization enhances the binding affinity for LXXLL motifs from coactivators. Interacts with NCOA3 and NCOA6 coactivators. Interacts with coactivator FAM120B. Interacts with coactivator PELP1, SENP6, SFPQ, DNTTIP2 and RNF8. Interacts with PRMT2. Interacts with ASXL1. Interacts with BHLHE40/DEC1, BHLHE41/DEC2, NCOR1 and NCOR2. Interacts in a ligand-dependent fashion with MED1 and NCOA1. Interacts with VDR. Interacts with EP300; the interaction is decreased by 9-cis retinoic acid. Heterodimer (via C-terminus) with NR4A1 (via DNA-binding domain); DNA-binding of the heterodimer is enhanced by 9-cis retinoic acid. NR4A1 competes with EP300 for interaction with RXRA and thereby attenuates EP300 mediated acetylation of RXRA. In the absence of hormonal ligand, interacts with TACC1. Interacts ith IGFBP3. As to quaternary structure, (Microbial infection) Interacts (via the DNA binding domain) with HCV core protein; the interaction enhances the transcriptional activities of the RXRA/RARA and the RXRA/PPARA heterodimers. In terms of processing, acetylated by EP300; acetylation enhances DNA binding and transcriptional activity. Post-translationally, phosphorylated on serine and threonine residues mainly in the N-terminal modulating domain. Constitutively phosphorylated on Ser-21 in the presence or absence of ligand. Under stress conditions, hyperphosphorylated by activated JNK on Ser-56, Ser-70, Thr-82 and Ser-260. Phosphorylated on Ser-27, in vitro, by PKA. This phosphorylation is required for repression of cAMP-mediated transcriptional activity of RARA. Ubiquitinated by UBR5, leading to its degradation: UBR5 specifically recognizes and binds ligand-bound RXRA when it is not associated with coactivators (NCOAs). In presence of NCOAs, the UBR5-degron is not accessible, preventing its ubiquitination and degradation. In terms of processing, sumoylation negatively regulates transcriptional activity. Desumoylated specifically by SENP6. Expressed in lung fibroblasts (at protein level). Expressed in monocytes. Highly expressed in liver, also found in kidney and brain.

It is found in the nucleus. The protein localises to the cytoplasm. It localises to the mitochondrion. Receptor for retinoic acid that acts as a transcription factor. Forms homo- or heterodimers with retinoic acid receptors (RARs) and binds to target response elements in response to their ligands, all-trans or 9-cis retinoic acid, to regulate gene expression in various biological processes. The RAR/RXR heterodimers bind to the retinoic acid response elements (RARE) composed of tandem 5'-AGGTCA-3' sites known as DR1-DR5 to regulate transcription. The high affinity ligand for retinoid X receptors (RXRs) is 9-cis retinoic acid. In the absence of ligand, the RXR-RAR heterodimers associate with a multiprotein complex containing transcription corepressors that induce histone deacetylation, chromatin condensation and transcriptional suppression. On ligand binding, the corepressors dissociate from the receptors and coactivators are recruited leading to transcriptional activation. Serves as a common heterodimeric partner for a number of nuclear receptors, such as RARA, RARB and PPARA. The RXRA/RARB heterodimer can act as a transcriptional repressor or transcriptional activator, depending on the RARE DNA element context. The RXRA/PPARA heterodimer is required for PPARA transcriptional activity on fatty acid oxidation genes such as ACOX1 and the P450 system genes. Together with RARA, positively regulates microRNA-10a expression, thereby inhibiting the GATA6/VCAM1 signaling response to pulsatile shear stress in vascular endothelial cells. Acts as an enhancer of RARA binding to RARE DNA element. May facilitate the nuclear import of heterodimerization partners such as VDR and NR4A1. Promotes myelin debris phagocytosis and remyelination by macrophages. Plays a role in the attenuation of the innate immune system in response to viral infections, possibly by negatively regulating the transcription of antiviral genes such as type I IFN genes. Involved in the regulation of calcium signaling by repressing ITPR2 gene expression, thereby controlling cellular senescence. This Homo sapiens (Human) protein is Retinoic acid receptor RXR-alpha (RXRA).